We begin with the raw amino-acid sequence, 111 residues long: MTTAFMTTDEVAQLRASDCMSCAGVDCTVADSGPVLEEFYQTTPRYNYQGGVTGKFWAKVHEVVDILNSSNEWPFEPLEVSRDRKTLWDGHHRSNAAILAGCDKPIPVEEW.

The sequence is that of Gene 81 protein (81) from Mycobacterium (Mycobacteriophage L5).